The following is a 157-amino-acid chain: Small ribosomal subunit protein uS7 (157 aa).

The protein belongs to the universal ribosomal protein uS7 family. In terms of assembly, part of the 30S ribosomal subunit. Contacts proteins S9 and S11.

One of the primary rRNA binding proteins, it binds directly to 16S rRNA where it nucleates assembly of the head domain of the 30S subunit. Is located at the subunit interface close to the decoding center, probably blocks exit of the E-site tRNA. The chain is Small ribosomal subunit protein uS7 from Opitutus terrae (strain DSM 11246 / JCM 15787 / PB90-1).